The following is a 283-amino-acid chain: Protein/nucleic acid deglycase HchA (283 aa).

His-86, Glu-91, and His-123 together coordinate Zn(2+). Cys-185 serves as the catalytic Nucleophile.

Belongs to the peptidase C56 family. HchA subfamily. In terms of assembly, homodimer.

It is found in the cytoplasm. The catalysed reaction is N(omega)-(1-hydroxy-2-oxopropyl)-L-arginyl-[protein] + H2O = lactate + L-arginyl-[protein] + H(+). It carries out the reaction N(6)-(1-hydroxy-2-oxopropyl)-L-lysyl-[protein] + H2O = lactate + L-lysyl-[protein] + H(+). It catalyses the reaction S-(1-hydroxy-2-oxopropyl)-L-cysteinyl-[protein] + H2O = lactate + L-cysteinyl-[protein] + H(+). The enzyme catalyses N(omega)-(1-hydroxy-2-oxoethyl)-L-arginyl-[protein] + H2O = L-arginyl-[protein] + glycolate + H(+). The catalysed reaction is N(6)-(1-hydroxy-2-oxoethyl)-L-lysyl-[protein] + H2O = glycolate + L-lysyl-[protein] + H(+). It carries out the reaction S-(1-hydroxy-2-oxoethyl)-L-cysteinyl-[protein] + H2O = glycolate + L-cysteinyl-[protein] + H(+). It catalyses the reaction N(2)-(1-hydroxy-2-oxopropyl)-dGTP + H2O = lactate + dGTP + H(+). The enzyme catalyses N(2)-(1-hydroxy-2-oxopropyl)-GTP + H2O = lactate + GTP + H(+). The catalysed reaction is N(2)-(1-hydroxy-2-oxopropyl)-GDP + H2O = lactate + GDP + H(+). It carries out the reaction N(2)-(1-hydroxy-2-oxopropyl)-GMP + H2O = lactate + GMP + H(+). It catalyses the reaction N(2)-(1-hydroxy-2-oxoethyl)-dGTP + H2O = dGTP + glycolate + H(+). The enzyme catalyses N(2)-(1-hydroxy-2-oxoethyl)-GTP + H2O = glycolate + GTP + H(+). The catalysed reaction is N(2)-(1-hydroxy-2-oxoethyl)-GDP + H2O = glycolate + GDP + H(+). It carries out the reaction N(2)-(1-hydroxy-2-oxoethyl)-GMP + H2O = glycolate + GMP + H(+). It catalyses the reaction an N(2)-(1-hydroxy-2-oxopropyl)-guanosine in RNA + H2O = a guanosine in RNA + lactate + H(+). The enzyme catalyses an N(2)-(1-hydroxy-2-oxopropyl)-2'-deoxyguanosine in DNA + H2O = a 2'-deoxyguanosine in DNA + lactate + H(+). The catalysed reaction is an N(2)-(1-hydroxy-2-oxoethyl)-guanosine in RNA + H2O = a guanosine in RNA + glycolate + H(+). It carries out the reaction an N(2)-(1-hydroxy-2-oxoethyl)-2'-deoxyguanosine in DNA + H2O = a 2'-deoxyguanosine in DNA + glycolate + H(+). Functionally, protein and nucleotide deglycase that catalyzes the deglycation of the Maillard adducts formed between amino groups of proteins or nucleotides and reactive carbonyl groups of glyoxals. Thus, functions as a protein deglycase that repairs methylglyoxal- and glyoxal-glycated proteins, and releases repaired proteins and lactate or glycolate, respectively. Deglycates cysteine, arginine and lysine residues in proteins, and thus reactivates these proteins by reversing glycation by glyoxals. Acts on early glycation intermediates (hemithioacetals and aminocarbinols), preventing the formation of Schiff bases and advanced glycation endproducts (AGE). Also functions as a nucleotide deglycase able to repair glycated guanine in the free nucleotide pool (GTP, GDP, GMP, dGTP) and in DNA and RNA. Is thus involved in a major nucleotide repair system named guanine glycation repair (GG repair), dedicated to reversing methylglyoxal and glyoxal damage via nucleotide sanitization and direct nucleic acid repair. Plays an important role in protecting cells from carbonyl stress. This is Protein/nucleic acid deglycase HchA from Escherichia coli O157:H7.